The chain runs to 356 residues: Protein ATP1B4 (356 aa).

The Nuclear segment spans residues 1 to 109 (MRRQLRSRRA…SLARTGQSRS (109 aa)). Positions 26–78 (EANHNYLADEEEEAEEEAQVMMVPGLEEEEEEEEGKEEEEEREEEEGQGQSTG) are disordered. Acidic residues-rich tracts occupy residues 33–43 (ADEEEEAEEEA) and 51–72 (LEEEEEEEEGKEEEEEREEEEG). Residues 110-130 (LILVIYFFFYASLAAVITLFI) traverse the membrane as a helical; Signal-anchor for type II membrane protein segment. Residues 131 to 356 (YMLFLAISPY…RIIFTLNIET (226 aa)) are Perinuclear space-facing.

It belongs to the X(+)/potassium ATPases subunit beta family. Associates with a SMAD7-transcriptional complex. Interacts with TOR1AIP1. Does not associate with known Na,K-ATPase alpha-subunits. Interacts with SNW1. In terms of tissue distribution, expressed in skeletal muscle (at protein level). Expressed during postnatal development in skeletal muscle and heart.

Its subcellular location is the nucleus inner membrane. Its function is as follows. May act as a transcriptional coregulator during muscle development through its interaction with SNW1. Has lost its ancestral function as a Na,K-ATPase beta-subunit. The protein is Protein ATP1B4 (Atp1b4) of Mus musculus (Mouse).